Here is a 451-residue protein sequence, read N- to C-terminus: Metalloprotease MJ0996 (451 aa).

This sequence belongs to the peptidase U62 family.

Functionally, probable metalloprotease. The polypeptide is Metalloprotease MJ0996 (Methanocaldococcus jannaschii (strain ATCC 43067 / DSM 2661 / JAL-1 / JCM 10045 / NBRC 100440) (Methanococcus jannaschii)).